A 497-amino-acid chain; its full sequence is Putative BTB/POZ domain-containing protein R738 (497 aa).

Residues 16–86 (SDCKLVLDDG…FYEKSNVINA (71 aa)) form the BTB domain.

This sequence belongs to the mimivirus BTB/WD family.

This Acanthamoeba polyphaga (Amoeba) protein is Putative BTB/POZ domain-containing protein R738.